The primary structure comprises 256 residues: MSNLAQFDSDFYQSNFTIDNQEQSGNDSNAYGNLYGSRKQQAGEQPQPASFVPSEMLMSSGYAGQFFQPASNSDYYSQSPYIDSFDEEPPLLEELGIHFDHIWQKTLTVLNPMKPVDGSIMNETDLTGPILFCVALGATLLLAGKVQFGYVYGMSAIGCLVIHALLNLMSSSGVSYGCVASVLGYCLLPMVILSGCAMFFSLQGIFGIMSSLVIIGWCSLSASKIFIAALHMEGQQLLVAYPCAILYGLFALLTIF.

Topologically, residues 1 to 125 are cytoplasmic; the sequence is MSNLAQFDSD…VDGSIMNETD (125 aa). Polar residues-rich tracts occupy residues 18–31 and 38–48; these read IDNQEQSGNDSNAY and RKQQAGEQPQP. Positions 18 to 48 are disordered; the sequence is IDNQEQSGNDSNAYGNLYGSRKQQAGEQPQP. Residues 126–146 form a helical membrane-spanning segment; it reads LTGPILFCVALGATLLLAGKV. A topological domain (extracellular) is located at residue glutamine 147. The chain crosses the membrane as a helical span at residues 148 to 168; the sequence is FGYVYGMSAIGCLVIHALLNL. The Cytoplasmic portion of the chain corresponds to 169–172; it reads MSSS. Residues 173-193 traverse the membrane as a helical segment; it reads GVSYGCVASVLGYCLLPMVIL. The Extracellular segment spans residues 194 to 196; the sequence is SGC. A helical transmembrane segment spans residues 197-217; that stretch reads AMFFSLQGIFGIMSSLVIIGW. Over 218-235 the chain is Cytoplasmic; the sequence is CSLSASKIFIAALHMEGQ. The helical transmembrane segment at 236–256 threads the bilayer; sequence QLLVAYPCAILYGLFALLTIF.

The protein belongs to the YIP1 family.

The protein localises to the endoplasmic reticulum membrane. It localises to the golgi apparatus. Its subcellular location is the cis-Golgi network membrane. The protein resides in the trans-Golgi network membrane. This Homo sapiens (Human) protein is Protein YIPF7 (YIPF7).